Here is a 253-residue protein sequence, read N- to C-terminus: Phosphoribosylaminoimidazole-succinocarboxamide synthase (253 aa).

This sequence belongs to the SAICAR synthetase family.

The catalysed reaction is 5-amino-1-(5-phospho-D-ribosyl)imidazole-4-carboxylate + L-aspartate + ATP = (2S)-2-[5-amino-1-(5-phospho-beta-D-ribosyl)imidazole-4-carboxamido]succinate + ADP + phosphate + 2 H(+). Its pathway is purine metabolism; IMP biosynthesis via de novo pathway; 5-amino-1-(5-phospho-D-ribosyl)imidazole-4-carboxamide from 5-amino-1-(5-phospho-D-ribosyl)imidazole-4-carboxylate: step 1/2. The chain is Phosphoribosylaminoimidazole-succinocarboxamide synthase from Dinoroseobacter shibae (strain DSM 16493 / NCIMB 14021 / DFL 12).